The sequence spans 424 residues: Inhibin beta A chain (424 aa).

The N-terminal stretch at 1 to 20 is a signal peptide; sequence MPLLWLRGFLLASCWIIVRS. The propeptide occupies 21–308; sequence SPTPGSEGPG…EDHPHRRRRR (288 aa). N-linked (GlcNAc...) asparagine glycosylation occurs at N165. The disordered stretch occupies residues 257-288; the sequence is KKKKKEEEGEGKKKDGGDGGAGADEDKEQSHR. Positions 261-273 are enriched in basic and acidic residues; that stretch reads KEEEGEGKKKDGG. 4 disulfides stabilise this stretch: C312–C320, C319–C389, C348–C421, and C352–C423.

It belongs to the TGF-beta family. Dimeric, linked by one or more disulfide bonds. Inhibin A is a dimer of alpha/INHA and beta-A/INHBA. Activin A is a homodimer of beta-A/INHBA. Activin AB is a dimer of beta-A/INHBA and beta-B/INHBB. Interacts with FST and FSTL3; these interactions prevent activin A interaction to its type II receptor. Activin A interacts with ACVR2A. Activin A interacts with BMPR2. Inhibin A interacts with ACVR1; this interaction creates a non-signaling complex (NSC) that inhibits ACVR1-mediated BMP signaling. Inhibin A interacts with ACVR2A.

The protein localises to the secreted. Functionally, inhibins/activins are involved in regulating a number of diverse functions such as hypothalamic and pituitary hormone secretion, gonadal hormone secretion, germ cell development and maturation, erythroid differentiation, insulin secretion, nerve cell survival, embryonic axial development or bone growth, depending on their subunit composition. Its function is as follows. Activin A is a homodimer of INHBA that plays a role in several essential biological processes including embryonic development, stem cell maintenance and differentiation, haematopoiesis, cell proliferation and tissue fibrosis. Signals through type I (such as ACVR1B or ACVR1C) and type II receptors (such as ACVR2A, ACVR2B or BMPR2) which, upon ligand binding, phosphorylate SMAD2 and SMAD3 intracellular signaling mediators that form a complex with SMAD4, translocate to the nucleus and modulate gene expression. Can also activate alternative non-canonical intracellular signaling pathways including the p38 MAPK, extracellular signal-regulated kinases 1/2 (ERK1/2) and c-Jun N-terminal kinases (JNKs) to modulate cell migration and differentiation. Alternatively, promotes osteoblastic differentiation via ACVRL1-SMAD1/5/9 pathway. In addition, can engage the type I receptor ACVR1 to form an ACVR1-activin A-type II receptor non-signaling complex (NSC) that renders receptors unavailable for engagement with BMPs, hence resulting in an apparent inhibition of ACVR1-mediated BMP signaling. In terms of biological role, inhibin A is a dimer of alpha/INHA and beta-A/INHBA that functions as a feedback regulator in the hypothalamic-pituitary-gonadal (HPG) axis. Inhibits the secretion of FSH from the anterior pituitary gland by acting on pituitary gonadotrope cells. Antagonizes activin A by binding to the proteoglycan, betaglycan, and forming a stable complex with and, thereby, sequestering type II activin receptors while excluding type I receptor. The polypeptide is Inhibin beta A chain (INHBA) (Felis catus (Cat)).